Consider the following 125-residue polypeptide: Holo-[acyl-carrier-protein] synthase (125 aa).

Aspartate 8 and glutamate 57 together coordinate Mg(2+).

This sequence belongs to the P-Pant transferase superfamily. AcpS family. It depends on Mg(2+) as a cofactor.

The protein resides in the cytoplasm. It catalyses the reaction apo-[ACP] + CoA = holo-[ACP] + adenosine 3',5'-bisphosphate + H(+). Transfers the 4'-phosphopantetheine moiety from coenzyme A to a Ser of acyl-carrier-protein. The sequence is that of Holo-[acyl-carrier-protein] synthase from Geotalea daltonii (strain DSM 22248 / JCM 15807 / FRC-32) (Geobacter daltonii).